Consider the following 101-residue polypeptide: Small ribosomal subunit protein uS14 (101 aa).

Belongs to the universal ribosomal protein uS14 family. As to quaternary structure, part of the 30S ribosomal subunit. Contacts proteins S3 and S10.

Binds 16S rRNA, required for the assembly of 30S particles and may also be responsible for determining the conformation of the 16S rRNA at the A site. The protein is Small ribosomal subunit protein uS14 of Synechococcus sp. (strain JA-3-3Ab) (Cyanobacteria bacterium Yellowstone A-Prime).